Reading from the N-terminus, the 630-residue chain is 1-deoxy-D-xylulose-5-phosphate synthase (630 aa).

Residues His72 and 113-115 contribute to the thiamine diphosphate site; that span reads GHS. Residue Asp144 coordinates Mg(2+). Residues 145–146, Asn173, Tyr284, and Glu367 contribute to the thiamine diphosphate site; that span reads GA. Asn173 lines the Mg(2+) pocket.

This sequence belongs to the transketolase family. DXPS subfamily. In terms of assembly, homodimer. Mg(2+) serves as cofactor. Requires thiamine diphosphate as cofactor.

The enzyme catalyses D-glyceraldehyde 3-phosphate + pyruvate + H(+) = 1-deoxy-D-xylulose 5-phosphate + CO2. It participates in metabolic intermediate biosynthesis; 1-deoxy-D-xylulose 5-phosphate biosynthesis; 1-deoxy-D-xylulose 5-phosphate from D-glyceraldehyde 3-phosphate and pyruvate: step 1/1. In terms of biological role, catalyzes the acyloin condensation reaction between C atoms 2 and 3 of pyruvate and glyceraldehyde 3-phosphate to yield 1-deoxy-D-xylulose-5-phosphate (DXP). The polypeptide is 1-deoxy-D-xylulose-5-phosphate synthase (Geobacillus thermodenitrificans (strain NG80-2)).